Consider the following 263-residue polypeptide: Indole-3-glycerol phosphate synthase (263 aa).

It belongs to the TrpC family.

It catalyses the reaction 1-(2-carboxyphenylamino)-1-deoxy-D-ribulose 5-phosphate + H(+) = (1S,2R)-1-C-(indol-3-yl)glycerol 3-phosphate + CO2 + H2O. The protein operates within amino-acid biosynthesis; L-tryptophan biosynthesis; L-tryptophan from chorismate: step 4/5. The polypeptide is Indole-3-glycerol phosphate synthase (Laribacter hongkongensis (strain HLHK9)).